A 342-amino-acid chain; its full sequence is MSINIEQAIIHEISQDSQGQLRCRLRPQPLLNGQAVEMMLEELHQTYTSKSGKGFGYFGIHGDDGEANPAFANALKEYRAGDLGFVEFTGQASKLLQEELAKYDFSQGGFLLMSCYTSMASDYLFVALLSAKSSMTVLDDMELSQNNHLDLNNIQLAARIDLTELQADKDSRKYISFIRGRAGRKVADFFLDFMGCVEGVNTKAQNKTLMNAVEDFVASSDLTKEERQQCRNKVFEYCSERFDEGADIEIKDLADELADQGMESFYDFARGGSYELDEEFPADKSTLRQLKKFSGTGGGVTISFDGGHLGQRVIYDPISDTILIKGVPANLKDQLDRRLKGE.

This sequence belongs to the YejK family.

It is found in the cytoplasm. The protein localises to the nucleoid. The polypeptide is Nucleoid-associated protein SO_2177 (Shewanella oneidensis (strain ATCC 700550 / JCM 31522 / CIP 106686 / LMG 19005 / NCIMB 14063 / MR-1)).